Consider the following 161-residue polypeptide: Nucleotide-binding protein SAR11_0692 (161 aa).

Belongs to the YajQ family.

Functionally, nucleotide-binding protein. This Pelagibacter ubique (strain HTCC1062) protein is Nucleotide-binding protein SAR11_0692.